We begin with the raw amino-acid sequence, 650 residues long: Chaperone protein HtpG (650 aa).

The interval 1-349 (MSKTVKKFET…SSDLPLNVSR (349 aa)) is a; substrate-binding. The segment at 350–566 (EILQEDVQIK…EHGLNANMER (217 aa)) is b. Residues 567–650 (ILRAMNQTVP…VADGKAAAGE (84 aa)) form a c region.

The protein belongs to the heat shock protein 90 family. In terms of assembly, homodimer.

It is found in the cytoplasm. In terms of biological role, molecular chaperone. Has ATPase activity. This chain is Chaperone protein HtpG, found in Geobacter sulfurreducens (strain ATCC 51573 / DSM 12127 / PCA).